Here is a 253-residue protein sequence, read N- to C-terminus: Tropomyosin-1 (253 aa).

Residues 7–253 (VNKLVRLQGK…MDDVGDDDTQ (247 aa)) adopt a coiled-coil conformation.

Belongs to the tropomyosin family. In terms of assembly, homodimer.

Its function is as follows. Tropomyosin, in association with the troponin complex, plays a central role in the calcium dependent regulation of muscle contraction. This is Tropomyosin-1 (TROP1) from Hydra vulgaris (Hydra).